The primary structure comprises 228 residues: Endo-1,4-beta-xylanase A (228 aa).

The N-terminal stretch at 1 to 27 (MNLRKLRLLFVMCIGLTLILTAVPAHA) is a signal peptide. In terms of domain architecture, GH11 spans 29–222 (TITNNEMGNH…SSGSANVMTN (194 aa)). The active-site Nucleophile is the glutamate 120. Glutamate 209 (proton donor) is an active-site residue.

The protein belongs to the glycosyl hydrolase 11 (cellulase G) family.

It carries out the reaction Endohydrolysis of (1-&gt;4)-beta-D-xylosidic linkages in xylans.. Its pathway is glycan degradation; xylan degradation. The chain is Endo-1,4-beta-xylanase A (xynA) from Bacillus pumilus (Bacillus mesentericus).